The chain runs to 180 residues: ATP-dependent protease subunit HslV (180 aa).

T7 is a catalytic residue. Residues G165, C168, and T171 each contribute to the Na(+) site.

Belongs to the peptidase T1B family. HslV subfamily. In terms of assembly, a double ring-shaped homohexamer of HslV is capped on each side by a ring-shaped HslU homohexamer. The assembly of the HslU/HslV complex is dependent on binding of ATP.

The protein resides in the cytoplasm. It catalyses the reaction ATP-dependent cleavage of peptide bonds with broad specificity.. Allosterically activated by HslU binding. Functionally, protease subunit of a proteasome-like degradation complex believed to be a general protein degrading machinery. The chain is ATP-dependent protease subunit HslV from Bacillus cereus (strain G9842).